Reading from the N-terminus, the 30-residue chain is Dermaseptin-J10 (30 aa).

In terms of tissue distribution, expressed by the skin glands.

The protein resides in the secreted. Its function is as follows. Has antimicrobial activity. This is Dermaseptin-J10 from Phasmahyla jandaia (Jandaia leaf frog).